Consider the following 342-residue polypeptide: Cellular tumor antigen p53 (342 aa).

Residues Met1–Glu35 are transcription activation (acidic). A DNA-binding region spans residues Asn68–Ser255. Positions 142, 145, 201, and 205 each coordinate Zn(2+). The tract at residues Arg236–Arg243 is interaction with DNA. Over residues Asp244–Gly256 the composition is skewed to basic and acidic residues. Residues Asp244–Asp287 form a disordered region. Residues Lys261 to Lys278 carry the Bipartite nuclear localization signal motif. A compositionally biased stretch (low complexity) spans Thr271–Ser282. Residues Lys288–Thr317 are oligomerization. Residues Leu302 to Leu313 carry the Nuclear export signal motif. A disordered region spans residues Gly318–Asp342. The tract at residues Pro319–Lys336 is basic (repression of DNA-binding).

It belongs to the p53 family. In terms of assembly, binds DNA as a homotetramer. Zn(2+) is required as a cofactor.

Its subcellular location is the cytoplasm. It localises to the nucleus. In terms of biological role, multifunctional transcription factor that induces cell cycle arrest, DNA repair or apoptosis upon binding to its target DNA sequence. Acts as a tumor suppressor in many tumor types; induces growth arrest or apoptosis depending on the physiological circumstances and cell type. Negatively regulates cell division by controlling expression of a set of genes required for this process. One of the activated genes is an inhibitor of cyclin-dependent kinases. Apoptosis induction seems to be mediated either by stimulation of BAX and FAS antigen expression, or by repression of Bcl-2 expression. The chain is Cellular tumor antigen p53 (tp53) from Xiphophorus maculatus (Southern platyfish).